The following is a 332-amino-acid chain: L-lactate dehydrogenase A chain (332 aa).

Lysine 5 is modified (N6-acetyllysine; alternate). Lysine 5 bears the N6-succinyllysine; alternate mark. Lysine 14 is subject to N6-acetyllysine. Threonine 18 bears the Phosphothreonine mark. Residue 29 to 57 coordinates NAD(+); it reads GAVGMACAISILMKDLADELALVDVIEDK. The residue at position 57 (lysine 57) is an N6-acetyllysine; alternate. Lysine 57 participates in a covalent cross-link: Glycyl lysine isopeptide (Lys-Gly) (interchain with G-Cter in SUMO2); alternate. Lysine 81 is subject to N6-acetyllysine. Arginine 99 serves as a coordination point for NAD(+). Arginine 106 is a binding site for substrate. Lysine 118 is subject to N6-acetyllysine; alternate. Position 118 is an N6-succinyllysine; alternate (lysine 118). Lysine 126 carries the N6-acetyllysine modification. An NAD(+)-binding site is contributed by asparagine 138. Substrate is bound by residues asparagine 138 and arginine 169. Histidine 193 (proton acceptor) is an active-site residue. At lysine 232 the chain carries N6-acetyllysine. Tyrosine 239 carries the phosphotyrosine modification. N6-acetyllysine is present on lysine 243. Threonine 248 contributes to the substrate binding site. A phosphothreonine mark is found at threonine 309 and threonine 322.

Belongs to the LDH/MDH superfamily. LDH family. Homotetramer. Interacts with PTEN upstream reading frame protein MP31. ISGylated.

Its subcellular location is the cytoplasm. It catalyses the reaction (S)-lactate + NAD(+) = pyruvate + NADH + H(+). Its pathway is fermentation; pyruvate fermentation to lactate; (S)-lactate from pyruvate: step 1/1. In terms of biological role, interconverts simultaneously and stereospecifically pyruvate and lactate with concomitant interconversion of NADH and NAD(+). The sequence is that of L-lactate dehydrogenase A chain (LDHA) from Monodelphis domestica (Gray short-tailed opossum).